The following is a 474-amino-acid chain: PTS system N-acetylmuramic acid-specific EIIBC component (474 aa).

The region spanning 1-89 (MAKEISSELL…SELLGDAPVQ (89 aa)) is the PTS EIIB type-1 domain. The Cytoplasmic portion of the chain corresponds to 1-123 (MAKEISSELL…LAKFATIFTP (123 aa)). Catalysis depends on cysteine 29, which acts as the Phosphocysteine intermediate; for EIIB activity. Positions 115–474 (AKFATIFTPL…LFGCRNVNLD (360 aa)) constitute a PTS EIIC type-1 domain. Residues 124 to 144 (LIPGFIAAGLLLGIATLIATV) form a helical membrane-spanning segment. Topologically, residues 145-157 (MHVPADAQGTLPD) are periplasmic. Residues 158-178 (ALNFMKVFSKGLFTFLVILVG) traverse the membrane as a helical segment. The Cytoplasmic segment spans residues 179–180 (YN). A helical membrane pass occupies residues 181–201 (AAQAFGGTGVNGAIIAALFLL). Residues 202–217 (GYNPAATTGYYAGFHD) lie on the Periplasmic side of the membrane. The helical transmembrane segment at 218–238 (FFGLPIDPRGNIIGVLIAAWA) threads the bilayer. At 239 to 260 (CARIEGMVRRFMPDDLDMLLTS) the chain is on the cytoplasmic side. The chain crosses the membrane as a helical span at residues 261 to 281 (LITLLITATLAYLIIMPLGGW). At 282 to 301 (LFEGMSWLFMHLNSNPFGCA) the chain is on the periplasmic side. The chain crosses the membrane as a helical span at residues 302–322 (VLAGLFLIAVVFGVHQGFIPV). At 323–334 (YLALMDSQGFNS) the chain is on the cytoplasmic side. The chain crosses the membrane as a helical span at residues 335-355 (LFPILSMAGAGQVGAALALYW). The Periplasmic portion of the chain corresponds to 356–368 (RAQPHSALRSQVR). Residues 369–389 (GAIIPGLLGVGEPLIYGVTLP) traverse the membrane as a helical segment. The Cytoplasmic segment spans residues 390–393 (RMKP). The chain crosses the membrane as a helical span at residues 394–414 (FVTACLGGAAGGLFIGLIAWW). Residues 415 to 440 (GLPMGLNSAFGPSGLVALPLMTSAQG) lie on the Periplasmic side of the membrane. The chain crosses the membrane as a helical span at residues 441–461 (ILPAMAVYAGGILVAWVCGFI). The Cytoplasmic portion of the chain corresponds to 462-474 (FTTLFGCRNVNLD).

Its subcellular location is the cell inner membrane. It catalyses the reaction N-acetyl-beta-D-muramate(out) + N(pros)-phospho-L-histidyl-[protein] = N-acetyl-beta-D-muramate 6-phosphate(in) + L-histidyl-[protein]. In terms of biological role, the phosphoenolpyruvate-dependent sugar phosphotransferase system (sugar PTS), a major carbohydrate active transport system, catalyzes the phosphorylation of incoming sugar substrates concomitantly with their translocation across the cell membrane. This system is involved in N-acetylmuramic acid (MurNAc) transport, yielding cytoplasmic MurNAc-6-P. Is also able to take up anhydro-N-acetylmuramic acid (anhMurNAc), but cannot phosphorylate the carbon 6, probably because of the 1,6-anhydro ring. This is PTS system N-acetylmuramic acid-specific EIIBC component (murP) from Shigella flexneri.